A 507-amino-acid polypeptide reads, in one-letter code: Maturase K (507 aa).

It belongs to the intron maturase 2 family. MatK subfamily.

It is found in the plastid. Its subcellular location is the chloroplast. Functionally, usually encoded in the trnK tRNA gene intron. Probably assists in splicing its own and other chloroplast group II introns. The chain is Maturase K from Lyonia ligustrina (Maleberry).